Here is a 262-residue protein sequence, read N- to C-terminus: Ribonuclease 3 (262 aa).

An RNase III domain is found at 18-141; that stretch reads LATFLKNLDI…LVGAIYEDMG (124 aa). Glutamate 59 serves as a coordination point for Mg(2+). Aspartate 63 is a catalytic residue. The Mg(2+) site is built by aspartate 127 and glutamate 130. Glutamate 130 is an active-site residue.

This sequence belongs to the ribonuclease III family. Homodimer. Mg(2+) serves as cofactor.

Its subcellular location is the cytoplasm. The catalysed reaction is Endonucleolytic cleavage to 5'-phosphomonoester.. Digests double-stranded RNA. Involved in the processing of primary rRNA transcript to yield the immediate precursors to the large and small rRNAs (23S and 16S). Processes some mRNAs, and tRNAs when they are encoded in the rRNA operon. Processes pre-crRNA and tracrRNA of type II CRISPR loci if present in the organism. The chain is Ribonuclease 3 from Mycoplasma genitalium (strain ATCC 33530 / DSM 19775 / NCTC 10195 / G37) (Mycoplasmoides genitalium).